Reading from the N-terminus, the 1191-residue chain is MSFLDDNNACGQNLLNIVSVGNSIIAEILRLKDYVPSIYRLDNKADKAKYGELILDFSYFKIAEDHERRIEQSPELTELDDEARAQLPLITRFYLAFQSIHHYASDLQQYIEELNTGYYIQQTLETVLQEEEGRQLLCESLYLFGVILLMVDFHIPGDVRERLLIAYYRYSGGDATPSGDESNIHDVCLLLRSTGYVHPSIAAKVLGLGGKQAGARAASLVVPRYPEAYFSRFRFDENFVDLVVARLRCDDIYNQLNLYPHPAHRSTALSTQAAMLYVCLYFCPQVLHSQGSQMREIVDKFFCDNWTISVYMGMTVNLVDAWLDFKAARSAIENVISPPAIKALCQQQKEQLGKITQKTQEIVREGVLNDNFVLEHANKIIHLMRQSNVLLRWFCLHTSREVFIFAHTATLTGQVQKCVLHELQFNRNTLYNLLLNCSQMELSVREFLAEIQQTKEERWTKSREEAMQRLNELSEAFAGSRPLSKIEQNPQLQQWFGEVAGRLQKLELSRPQKSGRLIIQVMQALDDVQEYHNLHSNMLVKQQLQETRDMLNQMAQLINLKEDIEIHIQMITDFSYAWHLLQFDFTPPMQEHIKRQPQAVIGIRAVFLKLASTLEVPLMRINQARSEDLVSVSNYYSTELANFLRRVLQIVPETMFSILAKIIYLLTNVIKEFPTKVEKERLKDYAQFEERAKVAQLTNSIAVFTKGILMMKTTLVGVIELDPKQLLEDGIRKELVNHLANAYNLGLIFTPEKGKTPVQLLQQKLQALAKTIEGYRRSFEYIEDYLRVQGLRILLEESQRIINYNVEKECNAFLRNKVQEFQSEHQSQIIPIPNFPPLLGDPSNNFIGRLAHEILRCTDPKQTIFLDLKSTWYEKKAPHQEVLAGSGFFEILREALAPAGMVGLERLYAHMLADELKRNLERLQRNLTSDRMWVDTLAALTRELEARDFPTPEVSKQPLKYYQAYTQRWLKVWPTLLDWVLCIGQKQLLRREIAGELSFSSKCDAKLLENTADTLNKALLLELSLSKDLCDEKGVVMLTELQETLLYTGNFEPLEQVFLITKNTHNMALFMFLFTIAHLGRMQHSTITDCLLPKSAKDNIDNVPFIVGLVTILQQFHKNVKMLYISYMSQYVVTVSEAQLLDKEILGPEVVTALHFLLAFIRIARLPLGVLEQRIPNIILSEYEYLSTLLK.

It belongs to the strumpellin family. As to quaternary structure, component of the WASH complex.

The protein resides in the early endosome. Functionally, acts at least in part as component of the WASH complex which may regulate wash nucleation-promoting factor (NPF) activity and is required for its membrane targeting during endosomal sorting. During embryogenesis, not involved in the wash-dependent developmental migration of hemocytes anteriorly from the tail. This Drosophila melanogaster (Fruit fly) protein is WASH complex subunit homolog 5.